A 172-amino-acid polypeptide reads, in one-letter code: Adenine phosphoribosyltransferase (172 aa).

This sequence belongs to the purine/pyrimidine phosphoribosyltransferase family. Homodimer.

It localises to the cytoplasm. It carries out the reaction AMP + diphosphate = 5-phospho-alpha-D-ribose 1-diphosphate + adenine. It functions in the pathway purine metabolism; AMP biosynthesis via salvage pathway; AMP from adenine: step 1/1. Functionally, catalyzes a salvage reaction resulting in the formation of AMP, that is energically less costly than de novo synthesis. The polypeptide is Adenine phosphoribosyltransferase (Prochlorococcus marinus (strain NATL2A)).